The chain runs to 642 residues: Threonine--tRNA ligase (642 aa).

In terms of domain architecture, TGS spans M1 to T61. A catalytic region spans residues D244 to P535. C335, H386, and H512 together coordinate Zn(2+).

Belongs to the class-II aminoacyl-tRNA synthetase family. In terms of assembly, homodimer. The cofactor is Zn(2+).

Its subcellular location is the cytoplasm. It catalyses the reaction tRNA(Thr) + L-threonine + ATP = L-threonyl-tRNA(Thr) + AMP + diphosphate + H(+). Catalyzes the attachment of threonine to tRNA(Thr) in a two-step reaction: L-threonine is first activated by ATP to form Thr-AMP and then transferred to the acceptor end of tRNA(Thr). Also edits incorrectly charged L-seryl-tRNA(Thr). In Vibrio vulnificus (strain YJ016), this protein is Threonine--tRNA ligase.